We begin with the raw amino-acid sequence, 239 residues long: Tumor protein p53-inducible nuclear protein 1 (239 aa).

The short motif at 25-37 is the LIR element; sequence EKEDDEWILVDFI.

In terms of assembly, interacts with p53/TP53 and HIPK2. Interacts with PRKCG, GABARAP, GABARAPL1, GABARAPL2, MAP1LC3A, MAP1LC3B and MAP1LC3C. In terms of tissue distribution, ubiquitously expressed with highest levels in the thymus.

It is found in the cytoplasm. The protein resides in the cytosol. It localises to the nucleus. The protein localises to the PML body. Its subcellular location is the cytoplasmic vesicle. It is found in the autophagosome. In terms of biological role, antiproliferative and proapoptotic protein involved in cell stress response which acts as a dual regulator of transcription and autophagy. Acts as a positive regulator of autophagy. In response to cellular stress or activation of autophagy, relocates to autophagosomes where it interacts with autophagosome-associated proteins GABARAP, GABARAPL1/L2, MAP1LC3A/B/C and regulates autophagy. Acts as an antioxidant and plays a major role in p53/TP53-driven oxidative stress response. Possesses both a p53/TP53-independent intracellular reactive oxygen species (ROS) regulatory function and a p53/TP53-dependent transcription regulatory function. Positively regulates p53/TP53 and p73/TP73 and stimulates their capacity to induce apoptosis and regulate cell cycle. In response to double-strand DNA breaks, promotes p53/TP53 phosphorylation on 'Ser-46' and subsequent apoptosis. Acts as a tumor suppressor by inducing cell death by an autophagy and caspase-dependent mechanism. Can reduce cell migration by regulating the expression of SPARC. The sequence is that of Tumor protein p53-inducible nuclear protein 1 (Trp53inp1) from Mus musculus (Mouse).